The primary structure comprises 137 residues: Nucleoside diphosphate kinase (137 aa).

Residues Lys-9, Phe-57, Arg-85, Thr-91, Arg-102, and Asn-112 each contribute to the ATP site. The active-site Pros-phosphohistidine intermediate is the His-115.

The protein belongs to the NDK family. As to quaternary structure, homotetramer. It depends on Mg(2+) as a cofactor.

Its subcellular location is the cytoplasm. It catalyses the reaction a 2'-deoxyribonucleoside 5'-diphosphate + ATP = a 2'-deoxyribonucleoside 5'-triphosphate + ADP. It carries out the reaction a ribonucleoside 5'-diphosphate + ATP = a ribonucleoside 5'-triphosphate + ADP. In terms of biological role, major role in the synthesis of nucleoside triphosphates other than ATP. The ATP gamma phosphate is transferred to the NDP beta phosphate via a ping-pong mechanism, using a phosphorylated active-site intermediate. The sequence is that of Nucleoside diphosphate kinase from Campylobacter jejuni subsp. jejuni serotype O:23/36 (strain 81-176).